The chain runs to 325 residues: RepFIB replication protein A (325 aa).

The segment at 279–298 (APNDESKENPLPPSPAEKVS) is disordered.

It belongs to the initiator RepB protein family.

Its function is as follows. This protein is essential for plasmid replication; it is involved in copy control functions. In vitro, binds to the DNA repeat units, BCDD'D'', EFG and HIJ. The sequence is that of RepFIB replication protein A (repA) from Escherichia coli.